A 115-amino-acid chain; its full sequence is U3-lycotoxin-Ls1a (115 aa).

Residues 1 to 20 (MKFVLLFGVFLVTLFSYSSA) form the signal peptide. The propeptide occupies 21-44 (EMLDDFDQADEDELLSLIEKEEAR). Disulfide bonds link Cys-48/Cys-63, Cys-55/Cys-72, Cys-62/Cys-87, and Cys-74/Cys-85.

This sequence belongs to the neurotoxin 19 (CSTX) family. 01 subfamily. As to expression, expressed by the venom gland.

It is found in the secreted. This is U3-lycotoxin-Ls1a from Lycosa singoriensis (Wolf spider).